Here is a 758-residue protein sequence, read N- to C-terminus: 5-methyltetrahydropteroyltriglutamate--homocysteine methyltransferase (758 aa).

5-methyltetrahydropteroyltri-L-glutamate contacts are provided by residues 17-20 (RELK) and Lys113. L-homocysteine-binding positions include 433–435 (IGS) and Glu486. L-methionine contacts are provided by residues 433–435 (IGS) and Glu486. Residues 517–518 (RC) and Trp563 each bind 5-methyltetrahydropteroyltri-L-glutamate. L-homocysteine is bound at residue Asp601. Position 601 (Asp601) interacts with L-methionine. Position 607 (Glu607) interacts with 5-methyltetrahydropteroyltri-L-glutamate. Zn(2+) is bound by residues His643, Cys645, and Glu667. His696 functions as the Proton donor in the catalytic mechanism. Cys728 provides a ligand contact to Zn(2+).

Belongs to the vitamin-B12 independent methionine synthase family. Zn(2+) serves as cofactor.

It catalyses the reaction 5-methyltetrahydropteroyltri-L-glutamate + L-homocysteine = tetrahydropteroyltri-L-glutamate + L-methionine. It participates in amino-acid biosynthesis; L-methionine biosynthesis via de novo pathway; L-methionine from L-homocysteine (MetE route): step 1/1. Catalyzes the transfer of a methyl group from 5-methyltetrahydrofolate to homocysteine resulting in methionine formation. The chain is 5-methyltetrahydropteroyltriglutamate--homocysteine methyltransferase from Nitrosomonas europaea (strain ATCC 19718 / CIP 103999 / KCTC 2705 / NBRC 14298).